The sequence spans 320 residues: Aminoacyl tRNA synthase complex-interacting multifunctional protein 2 (320 aa).

The interval 31–51 (HSKTTSPATDAGHVQEPSEPS) is disordered. Phosphoserine is present on Ser-36. The interval 82–162 (TPDADLDVTN…HTHSSVKNVP (81 aa)) is interaction with PRKN. The interval 162-225 (PENLLKCFGE…FLFSLFGQKH (64 aa)) is interaction with TP53. Residues 220–317 (LFGQKHNAVH…NLAPFSTALQ (98 aa)) enclose the GST C-terminal domain.

Part of the multisynthetase complex (MSC), a multisubunit complex that groups tRNA ligases for Arg (RARS1), Asp (DARS1), Gln (QARS1), Ile (IARS1), Leu (LARS1), Lys (KARS1), Met (MARS1) the bifunctional ligase for Glu and Pro (EPRS1) and the auxiliary subunits AIMP1/p43, AIMP2/p38 and EEF1E1/p18. Interacts (via N-terminus) with KARS1. Interacts with EPRS1. Forms a linear complex that contains MARS1, EEF1E1, EPRS1 and AIMP2 that is at the core of the multisubunit complex. Binds FUBP1 (via C-terminus). Interacts in both its unphosphorylated and phosphorylated forms with p53/TP53 (via N-terminus) in the nucleus following UV irradiation. Interacts (via N-terminus) with PRKN/parkin (via first RING-type domain). Interacts with TARS3. Phosphorylated on serine residues in response to UV irradiation. In terms of processing, ubiquitinated by PRKN, leading to its degradation by the proteasome.

The protein localises to the cytoplasm. It is found in the cytosol. The protein resides in the nucleus. Functionally, required for assembly and stability of the aminoacyl-tRNA synthase complex. Mediates ubiquitination and degradation of FUBP1, a transcriptional activator of MYC, leading to MYC down-regulation which is required for aveolar type II cell differentiation. Blocks MDM2-mediated ubiquitination and degradation of p53/TP53. Functions as a proapoptotic factor. This Rattus norvegicus (Rat) protein is Aminoacyl tRNA synthase complex-interacting multifunctional protein 2 (Aimp2).